The following is a 174-amino-acid chain: MEQEWLNVGKIVNTHGVRGEVRVVSKTDFPEERYKKGSVLYIFKQGQGEPLKVTVASHRQHKQFDLLTFEEISSLNEAELLKESILKVEKEHLGSLDEGEFYFHQIIGCEVYDEENQLVGQIKEILTPGANDVWVVGRKGKKDALIPYIPSVVKKIDISSKTIHIEVMEGLIDE.

A PRC barrel domain is found at 98–171; the sequence is EGEFYFHQII…TIHIEVMEGL (74 aa).

This sequence belongs to the RimM family. Binds ribosomal protein uS19.

The protein resides in the cytoplasm. Its function is as follows. An accessory protein needed during the final step in the assembly of 30S ribosomal subunit, possibly for assembly of the head region. Essential for efficient processing of 16S rRNA. May be needed both before and after RbfA during the maturation of 16S rRNA. It has affinity for free ribosomal 30S subunits but not for 70S ribosomes. The protein is Ribosome maturation factor RimM of Bacillus pumilus (strain SAFR-032).